Consider the following 319-residue polypeptide: Phosphoribosylformylglycinamidine cyclo-ligase (319 aa).

It belongs to the AIR synthase family.

It localises to the cytoplasm. The enzyme catalyses 2-formamido-N(1)-(5-O-phospho-beta-D-ribosyl)acetamidine + ATP = 5-amino-1-(5-phospho-beta-D-ribosyl)imidazole + ADP + phosphate + H(+). It participates in purine metabolism; IMP biosynthesis via de novo pathway; 5-amino-1-(5-phospho-D-ribosyl)imidazole from N(2)-formyl-N(1)-(5-phospho-D-ribosyl)glycinamide: step 2/2. The protein is Phosphoribosylformylglycinamidine cyclo-ligase of Sulfurisphaera tokodaii (strain DSM 16993 / JCM 10545 / NBRC 100140 / 7) (Sulfolobus tokodaii).